The sequence spans 128 residues: S-protein homolog 5 (128 aa).

The signal sequence occupies residues 1–20 (MEKVSIVCFFFFLLFGSGYG).

It belongs to the plant self-incompatibility (S1) protein family.

It localises to the secreted. The polypeptide is S-protein homolog 5 (Arabidopsis thaliana (Mouse-ear cress)).